Reading from the N-terminus, the 151-residue chain is Large ribosomal subunit protein uL13 (151 aa).

Belongs to the universal ribosomal protein uL13 family. In terms of assembly, part of the 50S ribosomal subunit.

Functionally, this protein is one of the early assembly proteins of the 50S ribosomal subunit, although it is not seen to bind rRNA by itself. It is important during the early stages of 50S assembly. This is Large ribosomal subunit protein uL13 from Synechococcus sp. (strain JA-2-3B'a(2-13)) (Cyanobacteria bacterium Yellowstone B-Prime).